The following is an 84-amino-acid chain: ATP synthase subunit c (84 aa).

Transmembrane regions (helical) follow at residues 10–30 and 53–73; these read IAVAIMIGLAALGTAIGFAIL and FIVAGLLDAISMIAVGVALFF.

It belongs to the ATPase C chain family. As to quaternary structure, F-type ATPases have 2 components, F(1) - the catalytic core - and F(0) - the membrane proton channel. F(1) has five subunits: alpha(3), beta(3), gamma(1), delta(1), epsilon(1). F(0) has three main subunits: a(1), b(2) and c(10-14). The alpha and beta chains form an alternating ring which encloses part of the gamma chain. F(1) is attached to F(0) by a central stalk formed by the gamma and epsilon chains, while a peripheral stalk is formed by the delta and b chains.

The protein resides in the cell inner membrane. In terms of biological role, f(1)F(0) ATP synthase produces ATP from ADP in the presence of a proton or sodium gradient. F-type ATPases consist of two structural domains, F(1) containing the extramembraneous catalytic core and F(0) containing the membrane proton channel, linked together by a central stalk and a peripheral stalk. During catalysis, ATP synthesis in the catalytic domain of F(1) is coupled via a rotary mechanism of the central stalk subunits to proton translocation. Its function is as follows. Key component of the F(0) channel; it plays a direct role in translocation across the membrane. A homomeric c-ring of between 10-14 subunits forms the central stalk rotor element with the F(1) delta and epsilon subunits. The chain is ATP synthase subunit c from Shewanella putrefaciens (strain CN-32 / ATCC BAA-453).